The primary structure comprises 276 residues: O-methyltransferase cnsE (276 aa).

S-adenosyl-L-methionine contacts are provided by residues glutamine 110, 133–134 (DA), and histidine 155.

The protein belongs to the methyltransferase superfamily. It depends on S-adenosyl-L-methionine as a cofactor.

It functions in the pathway alkaloid biosynthesis. In terms of biological role, O-methyltransferase; part of the gene cluster that mediates the biosynthesis of communesins, a prominent class of indole alkaloids with great potential as pharmaceuticals. Communesins are biosynthesized by the coupling of tryptamine and aurantioclavine, two building blocks derived from L-tryptophan. The L-tryptophan decarboxylase cnsB converts L-tryptophan to tryptamine, whereas the tryptophan dimethylallyltransferase cnsF converts L-tryptophan to 4-dimethylallyl tryptophan which is further transformed to aurantioclavine by the aurantioclavine synthase cnsA, probably aided by the catalase cnsD. The cytochrome P450 monooxygenase cnsC catalyzes the heterodimeric coupling between the two different indole moieties, tryptamine and aurantioclavine, to construct vicinal quaternary stereocenters and yield the heptacyclic communesin scaffold. The O-methyltransferase cnsE then methylates the communesin scaffold to produce communesin K, the simplest characterized communesin that contains the heptacyclic core. The dioxygenase cnsJ converts communesin K into communesin I. Acylation to introduce the hexadienyl group at position N16 of communesin I by the acyltransferase cnsK leads to the production of communesin B. The hexadienyl group is produced by the highly reducing polyketide synthase cnsI, before being hydrolytically removed from cnsI by the serine hydrolase cnsH, converted into hexadienyl-CoA by the CoA ligase cnsG, and then transferred to communesin I by cnsK. Surprisingly, cnsK may also be a promiscuous acyltransferase that can tolerate a range of acyl groups, including acetyl-, propionyl-, and butyryl-CoA, which lead to communesins A, G and H respectively. The roles of the alpha-ketoglutarate-dependent dioxygenases cnsM and cnsP have still to be determined. The protein is O-methyltransferase cnsE of Penicillium expansum (Blue mold rot fungus).